A 223-amino-acid polypeptide reads, in one-letter code: MRLVIAQCTVDYVGRLTAHLPSARRLLLFKADGSVSVHADDRAYKPLNWMSPPCRLVEQADGETPVWVVENKAGEQLRITVEAIEHDSSHELGVDPGLVKDGVEAHLQALLAEHVELLGAGYTLVRREYMTPIGPVDLLCRDEQGRSVAVEIKRRGEIDGVEQLTRYLELLNRDSLLAPVAGVFAAQQIKPQARTLATDRGIRCLTLDYDKMRGMDSDEFRLF.

Belongs to the NucS endonuclease family.

It is found in the cytoplasm. Cleaves both 3' and 5' ssDNA extremities of branched DNA structures. This is Endonuclease NucS from Mycolicibacterium gilvum (strain PYR-GCK) (Mycobacterium gilvum (strain PYR-GCK)).